Here is a 315-residue protein sequence, read N- to C-terminus: MSIPANTIQKDKMMHSDYYTQSQGPTVEQQPEWQASVQPYSDPHAYSPSFYMNMSQVPHFLPAQVDPFIYPNTLGSYGGDKQVQCLWETNGQVCMHVCQNSGELSTHISSNHITHDSKFVCLWKGCDREFKMFKAKYKLVNHMRVHTGERPFLCDVCNKVFARSENLKIHKRIHSGEKPFQCTHNGCTKLFANSSDRKKHMHVHSSHKPYSCMYPDCGKTYTHPSSLRKHTKVHENEKKSQLSPEHDESSDSGNASIGTPTTDESLTFSPENIKRDQHLHTMHTFMDRPNPFMQMYQNQFSNPTYHMFMAKPDSY.

Residues 83-112 (VQCLWETNGQVCMHVCQNSGELSTHISSNH) form a C2H2-type 1; atypical zinc finger. The segment at 124–146 (KGCDREFKMFKAKYKLVNHMRVH) adopts a C2H2-type 2; degenerate zinc-finger fold. C2H2-type zinc fingers lie at residues 152–174 (FLCD…KRIH), 180–204 (FQCT…MHVH), and 210–234 (YSCM…TKVH). Residues 225–270 (SSLRKHTKVHENEKKSQLSPEHDESSDSGNASIGTPTTDESLTFSP) are disordered. Positions 233 to 249 (VHENEKKSQLSPEHDES) are enriched in basic and acidic residues. Residues 251 to 270 (DSGNASIGTPTTDESLTFSP) show a composition bias toward polar residues.

Interacts with TCF transcription factor pop-1; the interaction is direct and facilitates transcriptional activation; transcription may be repressed by beta-catenin/sys-1.

It is found in the nucleus. The protein resides in the cytoplasm. In terms of biological role, transcription factor. Modulates expression of target genes by binding to regulatory elements. Required for normal cell division timing and cell positioning in anterior lineages, acting in a cell-autonomous manner. Required for development, fusion and fate of cells of the ventral epidermis, the Pn.p cells, during larval development; acts in concert with homeobox genes lin-39 and mab-5. Required for the specification of the AIY interneuron. In complex with TCF transcription factor pop-1, positively modulates expression of LIM/homeobox protein ttx-3 in anterior daughter cells of the SMDD/AIY neuron lineage. This Caenorhabditis elegans protein is Zinc finger transcription factor ref-2.